Consider the following 305-residue polypeptide: Aspartate carbamoyltransferase catalytic subunit (305 aa).

Arg-53 and Thr-54 together coordinate carbamoyl phosphate. L-aspartate is bound at residue Lys-82. Residues Arg-103, His-131, and Gln-134 each contribute to the carbamoyl phosphate site. The L-aspartate site is built by Arg-164 and Arg-226. Positions 265 and 266 each coordinate carbamoyl phosphate.

Belongs to the aspartate/ornithine carbamoyltransferase superfamily. ATCase family. In terms of assembly, heterooligomer of catalytic and regulatory chains.

It catalyses the reaction carbamoyl phosphate + L-aspartate = N-carbamoyl-L-aspartate + phosphate + H(+). It functions in the pathway pyrimidine metabolism; UMP biosynthesis via de novo pathway; (S)-dihydroorotate from bicarbonate: step 2/3. Catalyzes the condensation of carbamoyl phosphate and aspartate to form carbamoyl aspartate and inorganic phosphate, the committed step in the de novo pyrimidine nucleotide biosynthesis pathway. This chain is Aspartate carbamoyltransferase catalytic subunit, found in Ignicoccus hospitalis (strain KIN4/I / DSM 18386 / JCM 14125).